A 216-amino-acid polypeptide reads, in one-letter code: LexA repressor (216 aa).

The segment at residues 28–48 (RAEIAAEFGFSSPNAAEEHLR) is a DNA-binding region (H-T-H motif). Residues serine 134 and lysine 171 each act as for autocatalytic cleavage activity in the active site.

It belongs to the peptidase S24 family. In terms of assembly, homodimer.

It catalyses the reaction Hydrolysis of Ala-|-Gly bond in repressor LexA.. Represses a number of genes involved in the response to DNA damage (SOS response), including recA and lexA. In the presence of single-stranded DNA, RecA interacts with LexA causing an autocatalytic cleavage which disrupts the DNA-binding part of LexA, leading to derepression of the SOS regulon and eventually DNA repair. The polypeptide is LexA repressor (Ralstonia pickettii (strain 12J)).